Reading from the N-terminus, the 137-residue chain is Phospholipase A2 group V (137 aa).

An N-terminal signal peptide occupies residues 1–20 (MKGLLTLAWFLACSVPAVPG). 6 cysteine pairs are disulfide-bonded: cysteine 46–cysteine 137, cysteine 48–cysteine 64, cysteine 63–cysteine 117, cysteine 70–cysteine 110, cysteine 79–cysteine 103, and cysteine 97–cysteine 108. Ca(2+) contacts are provided by tyrosine 47, glycine 49, and glycine 51. Residue histidine 67 is part of the active site. Ca(2+) is bound at residue aspartate 68. Aspartate 111 is a catalytic residue.

It belongs to the phospholipase A2 family. Ca(2+) serves as cofactor. In terms of processing, this enzyme lacks one of the seven disulfide bonds found in similar PA2 proteins. In terms of tissue distribution, expressed in peritoneal macrophages (at protein level). Expressed in heart, skeletal muscle and white adipose tissue.

Its subcellular location is the secreted. It localises to the cell membrane. The protein resides in the cytoplasmic vesicle. The protein localises to the phagosome. It is found in the recycling endosome. Its subcellular location is the golgi apparatus. It localises to the cis-Golgi network. The protein resides in the trans-Golgi network. The enzyme catalyses a 1,2-diacyl-sn-glycero-3-phosphocholine + H2O = a 1-acyl-sn-glycero-3-phosphocholine + a fatty acid + H(+). It carries out the reaction 1-hexadecanoyl-2-(9Z-octadecenoyl)-sn-glycero-3-phosphocholine + H2O = 1-hexadecanoyl-sn-glycero-3-phosphocholine + (9Z)-octadecenoate + H(+). It catalyses the reaction 1-hexadecanoyl-2-(5Z,8Z,11Z,14Z-eicosatetraenoyl)-sn-glycero-3-phosphocholine + H2O = 1-hexadecanoyl-sn-glycero-3-phosphocholine + (5Z,8Z,11Z,14Z)-eicosatetraenoate + H(+). The catalysed reaction is 1-hexadecanoyl-2-(9Z,12Z-octadecadienoyl)-sn-glycero-3-phosphoethanolamine + H2O = 1-hexadecanoyl-sn-glycero-3-phosphoethanolamine + (9Z,12Z)-octadecadienoate + H(+). The enzyme catalyses 1-hexadecanoyl-2-(5Z,8Z,11Z,14Z-eicosatetraenoyl)-sn-glycero-3-phosphoethanolamine + H2O = 1-hexadecanoyl-sn-glycero-3-phosphoethanolamine + (5Z,8Z,11Z,14Z)-eicosatetraenoate + H(+). It carries out the reaction 1-octadecanoyl-2-(5Z,8Z,11Z,14Z-eicosatetraenoyl)-sn-glycero-3-phospho-(1D-myo-inositol) + H2O = 1-octadecanoyl-sn-glycero-3-phospho-(1D-myo-inositol) + (5Z,8Z,11Z,14Z)-eicosatetraenoate + H(+). It catalyses the reaction 1-hexadecanoyl-2-(9Z-octadecenoyl)-sn-glycero-3-phosphoglycerol + H2O = 1-hexadecanoyl-sn-glycero-3-phosphoglycerol + (9Z)-octadecenoate + H(+). The catalysed reaction is N-hexadecanoyl-1,2-di-(9Z-octadecenoyl)-sn-glycero-3-phosphoethanolamine + H2O = N-hexadecanoyl-1-(9Z-octadecenoyl)-sn-glycero-3-phosphoethanolamine + (9Z)-octadecenoate + H(+). The enzyme catalyses 1'-[1,2-di-(9Z-octadecenoyl)-sn-glycero-3-phospho]-3'-[1-(9Z-octadecenoyl)-sn-glycero-3-phospho]-glycerol + H2O = 1',3'-bis-[1-(9Z-octadecenoyl)-sn-glycero-3-phospho]-glycerol + (9Z)-octadecenoate + H(+). It carries out the reaction 1',3'-bis[1,2-di-(9Z-octadecenoyl)-sn-glycero-3-phospho]-glycerol + H2O = 1'-[1,2-di-(9Z-octadecenoyl)-sn-glycero-3-phospho]-3'-[1-(9Z-octadecenoyl)-sn-glycero-3-phospho]-glycerol + (9Z)-octadecenoate + H(+). Its pathway is lipid metabolism; phospholipid metabolism. It participates in lipid metabolism; leukotriene B4 biosynthesis. It functions in the pathway lipid metabolism; leukotriene C4 biosynthesis. Functionally, secretory calcium-dependent phospholipase A2 that primarily targets extracellular phospholipids. Hydrolyzes the ester bond of the fatty acyl group attached at sn-2 position of phospholipids (phospholipase A2 activity), preferentially releasing fatty acyl groups with a low degree of unsaturation such as oleoyl (C18:1) and linoleoyl (C18:2) groups. Hydrolyzes low-density lipoprotein (LDL) phospholipids releasing unsaturated fatty acids that drive macrophage polarization toward an M2 phenotype. May act in an autocrine and paracrine manner. Contributes to lipid remodeling of cellular membranes at different subcellular locations and generation of lipid mediators involved in pathogen clearance. Cleaves sn-2 fatty acyl chains of cardiolipin, a major component of the inner membrane of mitochondria and bacterial membranes. Promotes phagocytosis of bacteria in macrophages through production of lysophosphatidylethanolamines. Displays bactericidal activity against Gram-positive bacteria by directly hydrolyzing the phospholipids of the bacterial membrane. Promotes phagocytosis and killing of ingested fungi likely through controlling phagosome-lysosome fusion and phagosome maturation. Plays a role in biosynthesis of cysteinyl leukotrienes (CysLTs) in myeloid cells. In eosinophils, triggers perinuclear arachidonate release and LTC4 synthesis in a PLA2G4A-independent way. In neutrophils, amplifies CysLTs biosynthesis initiated by PLA2G4A. Promotes immune complex clearance in macrophages via stimulating synthesis of CysLTs, which act through CYSLTR1 to trigger phagocytosis. May regulate antigen processing in antigen-presenting cells. In pulmonary macrophages regulates IL33 production required for activation of group 2 innate lymphoid cells. May play a role in the biosynthesis of N-acyl ethanolamines that regulate energy metabolism. Hydrolyzes N-acyl phosphatidylethanolamines to N-acyl lysophosphatidylethanolamines, which are further cleaved by a lysophospholipase D to release N-acyl ethanolamines. The protein is Phospholipase A2 group V (Pla2g5) of Mus musculus (Mouse).